The primary structure comprises 984 residues: MYCBP-associated protein (984 aa).

2 disordered regions span residues 61–88 (LEAS…EEPE) and 218–240 (GESK…PQHN). The segment covering 218-231 (GESKQKAPKEEKRP) has biased composition (basic and acidic residues). Thr-613 carries the post-translational modification Phosphothreonine. Ser-619 is subject to Phosphoserine. Disordered stretches follow at residues 693-729 (SPIS…KSIM) and 842-917 (PEEQ…ASQD). A compositionally biased stretch (basic and acidic residues) spans 862–910 (AGKEERKGAAQEKKQLGIKDKEDKKGAKLLGKEDRPNSKKHKAKDDKKV).

As to quaternary structure, interacts with MYCBP. In terms of tissue distribution, expressed specifically in testis.

Its subcellular location is the cytoplasm. The protein resides in the membrane. Functionally, may play a role in spermatogenesis. May be involved in synaptic processes. In Homo sapiens (Human), this protein is MYCBP-associated protein.